Consider the following 179-residue polypeptide: Bifunctional protein PyrR (179 aa).

Residues 99-111 carry the PRPP-binding motif; it reads VILIDDVLYTGRT.

The protein belongs to the purine/pyrimidine phosphoribosyltransferase family. PyrR subfamily. In terms of assembly, homodimer and homohexamer; in equilibrium.

It catalyses the reaction UMP + diphosphate = 5-phospho-alpha-D-ribose 1-diphosphate + uracil. In terms of biological role, regulates transcriptional attenuation of the pyrimidine nucleotide (pyr) operon by binding in a uridine-dependent manner to specific sites on pyr mRNA. This disrupts an antiterminator hairpin in the RNA and favors formation of a downstream transcription terminator, leading to a reduced expression of downstream genes. Functionally, also displays a weak uracil phosphoribosyltransferase activity which is not physiologically significant. The protein is Bifunctional protein PyrR of Latilactobacillus sakei subsp. sakei (strain 23K) (Lactobacillus sakei subsp. sakei).